The chain runs to 574 residues: Phenylalanine--tRNA ligase beta subunit (574 aa).

Positions Leu-278–Pro-353 constitute a B5 domain. 4 residues coordinate Mg(2+): Asp-331, Asp-337, Glu-340, and Asp-341.

The protein belongs to the phenylalanyl-tRNA synthetase beta subunit family. Type 2 subfamily. In terms of assembly, tetramer of two alpha and two beta subunits. Mg(2+) is required as a cofactor.

Its subcellular location is the cytoplasm. The enzyme catalyses tRNA(Phe) + L-phenylalanine + ATP = L-phenylalanyl-tRNA(Phe) + AMP + diphosphate + H(+). In Thermococcus kodakarensis (strain ATCC BAA-918 / JCM 12380 / KOD1) (Pyrococcus kodakaraensis (strain KOD1)), this protein is Phenylalanine--tRNA ligase beta subunit.